A 146-amino-acid chain; its full sequence is UPF0178 protein Lin1493 (146 aa).

Belongs to the UPF0178 family.

This is UPF0178 protein Lin1493 from Listeria innocua serovar 6a (strain ATCC BAA-680 / CLIP 11262).